A 140-amino-acid chain; its full sequence is Putative pre-16S rRNA nuclease (140 aa).

Belongs to the YqgF nuclease family.

It localises to the cytoplasm. Could be a nuclease involved in processing of the 5'-end of pre-16S rRNA. The polypeptide is Putative pre-16S rRNA nuclease (Vibrio cholerae serotype O1 (strain ATCC 39541 / Classical Ogawa 395 / O395)).